A 419-amino-acid chain; its full sequence is Synaptotagmin-2 (419 aa).

The Vesicular portion of the chain corresponds to 1–62 (MRNIFKRNQE…NEINKIPLPP (62 aa)). The segment at 16–39 (ATTTATMPIGPVDNSTESGGAGES) is disordered. Asparagine 29 is a glycosylation site (N-linked (GlcNAc...) asparagine). Residues 63–83 (WALIAIAVVAGLLLLTCCFCI) traverse the membrane as a helical segment. The Cytoplasmic segment spans residues 84–419 (CKKCCCKKKK…EVDALLGKNK (336 aa)). Residues 99–138 (GKGMKNAMNMKDMKGGQDDDDAETGLTEGEGEGEEEKEPE) form a disordered region. Over residues 116 to 136 (DDDDAETGLTEGEGEGEEEKE) the composition is skewed to acidic residues. 2 positions are modified to phosphothreonine: threonine 122 and threonine 125. The segment at 133–379 (EEKEPENLGK…AIGKIFVGSN (247 aa)) is phospholipid binding. 2 C2 domains span residues 139–258 (NLGK…EEWR) and 270–403 (KLGD…AQWH). Positions 169, 170, and 176 each coordinate Ca(2+). A Phosphothreonine modification is found at threonine 199. Tyrosine 227 is subject to Phosphotyrosine. 10 residues coordinate Ca(2+): aspartate 228, phenylalanine 229, aspartate 230, serine 233, lysine 234, aspartate 236, aspartate 301, aspartate 307, aspartate 361, and aspartate 363. Phosphothreonine is present on threonine 383.

The protein belongs to the synaptotagmin family. As to quaternary structure, homotetramer. Heterodimer; heterodimerizes with SYT1 in presence of calcium. Interacts with STON2. Interacts with SCAMP5. Interacts with PRRT2. The cofactor is Ca(2+). In terms of processing, phosphorylation at Thr-199 by WNK1, changes the calcium requirement for SYT2-binding to phospholipid membranes. As to expression, expressed at the neuromuscular junction. Expressed in melanocytes.

The protein resides in the cytoplasmic vesicle. The protein localises to the secretory vesicle. It is found in the synaptic vesicle membrane. Its subcellular location is the chromaffin granule membrane. It localises to the cytoplasm. Its function is as follows. Exhibits calcium-dependent phospholipid and inositol polyphosphate binding properties. May have a regulatory role in the membrane interactions during trafficking of synaptic vesicles at the active zone of the synapse. Plays a role in dendrite formation by melanocytes. In Homo sapiens (Human), this protein is Synaptotagmin-2.